The primary structure comprises 2422 residues: Non-reducing polyketide synthase trt4 (2422 aa).

The interval 14-196 is N-terminal acylcarrier protein transacylase domain (SAT); sequence VLFGPKCPKT…HHSDHTSVVQ (183 aa). The interval 289 to 314 is disordered; the sequence is VEPPDSHHNTNTTQDSDVTTNASPLT. A compositionally biased stretch (polar residues) spans 297 to 312; the sequence is NTNTTQDSDVTTNASP. One can recognise a Ketosynthase family 3 (KS3) domain in the interval 329–745; the sequence is TVPIAVTGMA…GSNAAIVLQE (417 aa). Catalysis depends on for beta-ketoacyl synthase activity residues C494, H629, and H668. Residues 856–1121 are malonyl-CoA:ACP transacylase (MAT) domain; it reads LCFGGQTGNT…CPIDLSGPQA (266 aa). S904 (for acyl/malonyl transferase activity) is an active-site residue. The N-terminal hotdog fold stretch occupies residues 1190–1316; the sequence is PSLVKLLNND…GKISISSEAN (127 aa). Residues 1190–1495 form the PKS/mFAS DH domain; it reads PSLVKLLNND…FTCVSIQSLK (306 aa). The tract at residues 1191-1494 is product template (PT) domain; the sequence is SLVKLLNNDG…TFTCVSIQSL (304 aa). The active-site Proton acceptor; for dehydratase activity is H1221. Residues 1345 to 1495 form a C-terminal hotdog fold region; the sequence is SSGLKRSTVY…FTCVSIQSLK (151 aa). D1402 serves as the catalytic Proton donor; for dehydratase activity. Residues 1535–1612 form the Carrier domain; it reads SRSEDGLRVV…GLVQRIFPGG (78 aa). At S1572 the chain carries O-(pantetheine 4'-phosphoryl)serine. The interval 1615 to 1636 is disordered; it reads AHVETHSQPPDKIGITTGDRMP. Residues 1774–2007 are methyltransferase (CMeT) domain; sequence QHASEHKLLH…GFNWVDWTDN (234 aa). Positions 2036–2383 are thioesterase (TE) domain; that stretch reads NAVAEETLVY…LAPHIPTDEY (348 aa). Active-site for thioesterase activity residues include S2159, D2320, and H2352.

It carries out the reaction 3 malonyl-CoA + acetyl-CoA + 2 S-adenosyl-L-methionine = 3,5-dimethylorsellinate + 2 S-adenosyl-L-homocysteine + 3 CO2 + 4 CoA. It functions in the pathway secondary metabolite biosynthesis; terpenoid biosynthesis. Non-reducing polyketide synthase; part of the gene cluster that mediates the biosynthesis of terretonin, a fungal meroterpenoid that acts as a mycotoxin. The first step of the pathway is the synthesis of 3,5-dimethylorsellinic acid (DMOA) by the polyketide synthase trt4. DMOA is then prenylated into farnesyl-DMOA by the polyprenyl transferase trt2. Methylation by the methyltransferase trt5 then leads to farnesyl-DMOA methyl ester which is further subject to epoxidation by the FAD-dependent monooxygenase trt8 to yield epoxyfarnesyl-DMOA methyl ester. Cyclization of epoxyfarnesyl-DMOA methyl ester by the terpene cyclase trt1 leads to a tetracycle intermediate which is in turn converted to preterretonin. Dehydrogenase trt9 comes next to transform preterretonin to preterrenoid. The FAD-dependent monooxygenase trt3 is then required for the C-hydroxylation at C16 of preterrenoid to yield terrenoid. The cytochrome P450 trt6 catalyzes three successive oxidations to transform terrenoid into an unstable intermediate, which then undergoes the D-ring expansion and unusual rearrangement of the methoxy group to afford the core skeleton of terretonin. Trt14 catalyzes the D-ring expansion of terretonin involving intramolecular methoxy rearrangement as well as the hydrolysis of the expanded D-ring and the methyl ester moiety. Finally, the nonheme iron-dependent dioxygenase trt7 accomplishes the last two oxidation reactions steps to complete the biosynthesis of terretonin. Terretonin C is produced via spontaneous decarboxylation of the terretonin precursor. Another shunt product of the terretonin biosynthesis is dihydrofarnesyl-DMOA, derived from epoxyfarnesyl-DMOA through hydrolysis of the epoxide. The protein is Non-reducing polyketide synthase trt4 of Aspergillus terreus (strain NIH 2624 / FGSC A1156).